The chain runs to 103 residues: Histone H4 (103 aa).

Positions 1–14 (MSGRGKGGKGLGKG) are enriched in gly residues. Residues 1–20 (MSGRGKGGKGLGKGGAKRHR) are disordered. N6-acetyl-N6-methyllysine; alternate is present on K6. Residues K6, K9, and K13 each carry the N6-acetyllysine; alternate modification. N6-methyllysine; alternate occurs at positions 6, 9, and 13. Residues K9 and K13 each carry the N6-butyryllysine; alternate modification. Position 13 is an N6-acetyl-N6-methyllysine; alternate (K13). K17 is subject to N6-acetyllysine. The DNA-binding element occupies 17 to 21 (KRHRK). An N6-succinyllysine modification is found at K32. R56 is modified (omega-N-methylarginine). Phosphoserine occurs at positions 61 and 65. An N6-succinyllysine modification is found at K78. At K80 the chain carries N6-acetyllysine. K92 carries the N6-glutaryllysine modification.

Belongs to the histone H4 family. The nucleosome is a histone octamer containing two molecules each of H2A, H2B, H3 and H4 assembled in one H3-H4 heterotetramer and two H2A-H2B heterodimers. The octamer wraps approximately 147 bp of DNA. Histone H4 is a component of the UAF (upstream activation factor) complex which consists of UAF30, RRN5, RRN9, RRN10, and histones H3 and H4. In terms of processing, glutarylation at Lys-92 (H4K91glu) destabilizes nucleosomes by promoting dissociation of the H2A-H2B dimers from nucleosomes.

It localises to the nucleus. It is found in the chromosome. Core component of nucleosome. Nucleosomes wrap and compact DNA into chromatin, limiting DNA accessibility to the cellular machineries which require DNA as a template. Histones thereby play a central role in transcription regulation, DNA repair, DNA replication and chromosomal stability. DNA accessibility is regulated via a complex set of post-translational modifications of histones, also called histone code, and nucleosome remodeling. Component of the UAF (upstream activation factor) complex which interacts with the upstream element of the RNA polymerase I promoter and forms a stable preinitiation complex. Together with SPT15/TBP UAF seems to stimulate basal transcription to a fully activated level. This is Histone H4 (HHF1) from Saccharomyces cerevisiae (strain ATCC 204508 / S288c) (Baker's yeast).